Reading from the N-terminus, the 395-residue chain is Elongation factor Tu (395 aa).

The region spanning 10-204 (KPHVNIGTIG…NVDEYIPLPQ (195 aa)) is the tr-type G domain. The segment at 19 to 26 (GHVDHGKT) is G1. 19–26 (GHVDHGKT) contacts GTP. A Mg(2+)-binding site is contributed by threonine 26. The segment at 60–64 (GITIN) is G2. Residues 81-84 (DCPG) are G3. GTP contacts are provided by residues 81-85 (DCPGH) and 136-139 (NKVD). The segment at 136-139 (NKVD) is G4. The tract at residues 174–176 (SAL) is G5.

This sequence belongs to the TRAFAC class translation factor GTPase superfamily. Classic translation factor GTPase family. EF-Tu/EF-1A subfamily. Monomer.

Its subcellular location is the cytoplasm. The catalysed reaction is GTP + H2O = GDP + phosphate + H(+). Functionally, GTP hydrolase that promotes the GTP-dependent binding of aminoacyl-tRNA to the A-site of ribosomes during protein biosynthesis. This Amoebophilus asiaticus (strain 5a2) protein is Elongation factor Tu.